Reading from the N-terminus, the 526-residue chain is Butyrophilin subfamily 1 member A1 (526 aa).

A signal peptide spans 1-26 (MAVFPSSGLPRCLLTLILLQLPKLDS). Ig-like V-type domains lie at 27 to 138 (APFD…ALVH) and 148 to 234 (PHIS…VEIS). Over 27 to 242 (APFDVIGPPE…ISIPASSLPR (216 aa)) the chain is Extracellular. Cystine bridges form between C50-C124 and C164-C218. 2 N-linked (GlcNAc...) asparagine glycosylation sites follow: N55 and N215. A helical transmembrane segment spans residues 243 to 269 (LTPWIVAVAVILMVLGLLTIGSIFFTW). Residues 270 to 526 (RLYNERPRER…IPTQPSQGAP (257 aa)) are Cytoplasmic-facing. Residues 285–479 (SKERLLEELK…LTICPIADGP (195 aa)) form the B30.2/SPRY domain. Residues 495-526 (IPLSPMGEDSAPRDADTLHSKLIPTQPSQGAP) are disordered. Over residues 504-513 (SAPRDADTLH) the composition is skewed to basic and acidic residues. Positions 517–526 (IPTQPSQGAP) are enriched in polar residues.

It belongs to the immunoglobulin superfamily. BTN/MOG family. Seems to associate with xanthine dehydrogenase/oxidase. N-glycosylated.

It is found in the membrane. The protein localises to the secreted. In terms of biological role, may function in the secretion of milk-fat droplets. May act as a specific membrane-associated receptor for the association of cytoplasmic droplets with the apical plasma membrane. Inhibits the proliferation of CD4 and CD8 T-cells activated by anti-CD3 antibodies, T-cell metabolism and IL2 and IFNG secretion. The polypeptide is Butyrophilin subfamily 1 member A1 (BTN1A1) (Homo sapiens (Human)).